A 90-amino-acid polypeptide reads, in one-letter code: MSRTIFCTFLQRDAEGQDFQLYPGDLGKRIYNEISKEAWAQWQTKQTMLINEKKLSMMNVDDRKLLEQEMIKFLFEGKDVHIEGYTPPSH.

The protein belongs to the Fe(2+)-trafficking protein family. Monomer.

Its function is as follows. Could be a mediator in iron transactions between iron acquisition and iron-requiring processes, such as synthesis and/or repair of Fe-S clusters in biosynthetic enzymes. This Pectobacterium carotovorum subsp. carotovorum (strain PC1) protein is Probable Fe(2+)-trafficking protein.